The chain runs to 347 residues: GMP reductase (347 aa).

108–131 contributes to the NADP(+) binding site; the sequence is ADFAKTAQILALNPALNFVCIDVA. Gly181 and Gly183 together coordinate K(+). Cys186 acts as the Thioimidate intermediate in catalysis. 216 to 239 contacts NADP(+); sequence IVSDGGCTMPGDVAKAFGGGADFV.

This sequence belongs to the IMPDH/GMPR family. GuaC type 1 subfamily. As to quaternary structure, homotetramer.

The catalysed reaction is IMP + NH4(+) + NADP(+) = GMP + NADPH + 2 H(+). Functionally, catalyzes the irreversible NADPH-dependent deamination of GMP to IMP. It functions in the conversion of nucleobase, nucleoside and nucleotide derivatives of G to A nucleotides, and in maintaining the intracellular balance of A and G nucleotides. The chain is GMP reductase from Salmonella arizonae (strain ATCC BAA-731 / CDC346-86 / RSK2980).